The primary structure comprises 187 residues: MAASMANFRTLRVLSKIFHGHFTAASAVQHHTACPRLVHTVSVFSPPSPAITESEEPDTLYQRLSVQVKGHDRAVLDSYEFFATLAAKELGLSLEKVFEPPKHIDKLTLLKSRHIFKKHRVQYEMRTHYRCIQISRITGSSARVYLEYIQRNLPEGVAMEVTKTAMEKIPEHIQKPLWDDNKPEASG.

It belongs to the universal ribosomal protein uS10 family. Component of the mitochondrial ribosome small subunit (28S) which comprises a 12S rRNA and about 30 distinct proteins.

It is found in the mitochondrion. The protein is Small ribosomal subunit protein uS10m (mrps10) of Danio rerio (Zebrafish).